The chain runs to 212 residues: Large ribosomal subunit protein uL1 (212 aa).

Belongs to the universal ribosomal protein uL1 family. In terms of assembly, part of the 50S ribosomal subunit.

Its function is as follows. Binds directly to 23S rRNA. Probably involved in E site tRNA release. Functionally, protein L1 is also a translational repressor protein, it controls the translation of its operon by binding to its mRNA. This is Large ribosomal subunit protein uL1 from Methanobrevibacter smithii (strain ATCC 35061 / DSM 861 / OCM 144 / PS).